The primary structure comprises 959 residues: DNA-directed RNA polymerase subunit beta'' (959 aa).

Residues Cys-211, Cys-288, Cys-295, and Cys-298 each contribute to the Zn(2+) site.

This sequence belongs to the RNA polymerase beta' chain family. RpoC2 subfamily. As to quaternary structure, in plastids the minimal PEP RNA polymerase catalytic core is composed of four subunits: alpha, beta, beta', and beta''. When a (nuclear-encoded) sigma factor is associated with the core the holoenzyme is formed, which can initiate transcription. Zn(2+) is required as a cofactor.

It is found in the plastid. Its subcellular location is the apicoplast. The enzyme catalyses RNA(n) + a ribonucleoside 5'-triphosphate = RNA(n+1) + diphosphate. DNA-dependent RNA polymerase catalyzes the transcription of DNA into RNA using the four ribonucleoside triphosphates as substrates. The chain is DNA-directed RNA polymerase subunit beta'' from Plasmodium falciparum (isolate 3D7).